Here is a 275-residue protein sequence, read N- to C-terminus: Nitrogenase iron protein 3 (275 aa).

9 to 16 serves as a coordination point for ATP; the sequence is GKGGIGKS. A [4Fe-4S] cluster-binding site is contributed by Cys97. An ADP-ribosylarginine; by dinitrogenase reductase ADP-ribosyltransferase modification is found at Arg100. Cys132 contacts [4Fe-4S] cluster.

The protein belongs to the NifH/BchL/ChlL family. Homodimer. [4Fe-4S] cluster serves as cofactor. The reversible ADP-ribosylation of Arg-100 inactivates the nitrogenase reductase and regulates nitrogenase activity.

The catalysed reaction is N2 + 8 reduced [2Fe-2S]-[ferredoxin] + 16 ATP + 16 H2O = H2 + 8 oxidized [2Fe-2S]-[ferredoxin] + 2 NH4(+) + 16 ADP + 16 phosphate + 6 H(+). Its function is as follows. The key enzymatic reactions in nitrogen fixation are catalyzed by the nitrogenase complex, which has 2 components: the iron protein and the molybdenum-iron protein. This Clostridium pasteurianum protein is Nitrogenase iron protein 3 (nifH3).